The following is a 118-amino-acid chain: Probable small nuclear ribonucleoprotein Sm D2 (118 aa).

A Sm domain is found at 29–115 (LSILTNSVKN…VILVVKNPLA (87 aa)).

Belongs to the snRNP core protein family.

Its subcellular location is the nucleus. The protein localises to the cytoplasm. The protein resides in the cytosol. Functionally, plays a role in pre-mRNA splicing as a core component of the spliceosomal U1, U2, U4 and U5 small nuclear ribonucleoproteins (snRNPs), the building blocks of the spliceosome. The protein is Probable small nuclear ribonucleoprotein Sm D2 (snr-4) of Caenorhabditis elegans.